A 778-amino-acid chain; its full sequence is Receptor like protein 28 (778 aa).

Residues 1-24 (MSGSHLRLRFLSLLLLCCVSSSTS) form the signal peptide. The Extracellular segment spans residues 25-739 (SLFTFSYPVL…EEQEQVLNWK (715 aa)). N-linked (GlcNAc...) asparagine glycosylation is found at Asn60, Asn72, Asn93, Asn106, Asn111, Asn147, Asn170, and Asn173. 5 LRR repeats span residues 99–123 (FHQL…EFGN), 125–147 (NKVE…SFSN), 148–171 (LSQL…VQNL), 172–195 (TNLS…LLMM), and 197–219 (FLSY…TSSK). The stretch at 220-240 (LEILYLGLKPFEGQILEPISK) is one LRR 6; degenerate repeat. LRR repeat units lie at residues 241–265 (LINL…LFSS), 266–291 (LKSL…LYIP), 293–313 (TLEK…ILKT), 314–338 (LQKL…LWRL), 340–363 (RLRS…VLVN), and 364–387 (SSME…PLSI). Residue Asn253 is glycosylated (N-linked (GlcNAc...) asparagine). 2 N-linked (GlcNAc...) asparagine glycosylation sites follow: Asn348 and Asn363. The stretch at 388–407 (KAFSAGYNNFSGEIPLSICN) is one LRR 13; degenerate repeat. N-linked (GlcNAc...) asparagine glycosylation is found at Asn396, Asn407, Asn420, Asn431, and Asn476. LRR repeat units lie at residues 408-429 (RSSL…PQCL), 430-453 (SNLT…LCAG), 455-477 (SLQT…LLNC), 479-500 (SLEF…WLKA), 501-525 (LPNL…HQSP), 528-552 (FPEL…YFVN), 601-625 (LNSY…IGLL), 626-649 (KELI…LANA), 650-673 (TELE…LKTL), and 678-700 (YINV…SSFE). 2 N-linked (GlcNAc...) asparagine glycosylation sites follow: Asn632 and Asn648. Asn680 carries an N-linked (GlcNAc...) asparagine glycan. Residues 740 to 760 (AVATGYGTGLLLGLAIAQVIA) traverse the membrane as a helical segment. Residues 761–778 (SYKPDWLVKIIGLFRFCF) are Cytoplasmic-facing.

Belongs to the RLP family.

The protein localises to the cell membrane. In Arabidopsis thaliana (Mouse-ear cress), this protein is Receptor like protein 28.